The chain runs to 231 residues: Large ribosomal subunit protein uL1 (231 aa).

The protein belongs to the universal ribosomal protein uL1 family. In terms of assembly, part of the 50S ribosomal subunit.

Functionally, binds directly to 23S rRNA. The L1 stalk is quite mobile in the ribosome, and is involved in E site tRNA release. In terms of biological role, protein L1 is also a translational repressor protein, it controls the translation of the L11 operon by binding to its mRNA. The chain is Large ribosomal subunit protein uL1 from Alkalilimnicola ehrlichii (strain ATCC BAA-1101 / DSM 17681 / MLHE-1).